Reading from the N-terminus, the 307-residue chain is 2-methoxy-6-polyprenyl-1,4-benzoquinol methylase, mitochondrial (307 aa).

The N-terminal 19 residues, 1–19 (MLISSRIVRSSLVNVPLRL), are a transit peptide targeting the mitochondrion. Residues Ser-122, Asp-148, 179-180 (NG), and Ser-197 each bind S-adenosyl-L-methionine.

It belongs to the class I-like SAM-binding methyltransferase superfamily. MenG/UbiE family. Component of a multi-subunit COQ enzyme complex, composed of at least COQ3, COQ4, COQ5, COQ6, COQ7 and COQ9. Interacts with COQ3.

The protein resides in the mitochondrion inner membrane. The enzyme catalyses 2-methoxy-6-(all-trans-hexaprenyl)benzene-1,4-diol + S-adenosyl-L-methionine = 5-methoxy-2-methyl-3-(all-trans-hexaprenyl)benzene-1,4-diol + S-adenosyl-L-homocysteine + H(+). It participates in cofactor biosynthesis; ubiquinone biosynthesis. Its function is as follows. Methyltransferase required for the conversion of 2-hexaprenyl-6-methoxy-1,4-benzoquinol (DDMQH2) to 2-hexaprenyl-3-methyl-6-methoxy-1,4-benzoquinol (DMQH2). In Saccharomyces cerevisiae (strain ATCC 204508 / S288c) (Baker's yeast), this protein is 2-methoxy-6-polyprenyl-1,4-benzoquinol methylase, mitochondrial.